The following is a 359-amino-acid chain: tRNA-specific 2-thiouridylase MnmA (359 aa).

ATP contacts are provided by residues 6–13 and leucine 32; that span reads AMSGGVDS. Cysteine 101 functions as the Nucleophile in the catalytic mechanism. Cysteine 101 and cysteine 193 are joined by a disulfide. Glycine 125 contacts ATP. The tract at residues 143–145 is interaction with tRNA; the sequence is KDQ. Catalysis depends on cysteine 193, which acts as the Cysteine persulfide intermediate.

It belongs to the MnmA/TRMU family.

The protein resides in the cytoplasm. It catalyses the reaction S-sulfanyl-L-cysteinyl-[protein] + uridine(34) in tRNA + AH2 + ATP = 2-thiouridine(34) in tRNA + L-cysteinyl-[protein] + A + AMP + diphosphate + H(+). Its function is as follows. Catalyzes the 2-thiolation of uridine at the wobble position (U34) of tRNA, leading to the formation of s(2)U34. This chain is tRNA-specific 2-thiouridylase MnmA, found in Mycobacterium sp. (strain JLS).